The following is a 391-amino-acid chain: Digeranylgeranylglycerophospholipid reductase (391 aa).

Glycine 13, glutamate 32, cysteine 43, alanine 44, glycine 46, arginine 97, alanine 121, aspartate 277, glycine 289, and isoleucine 290 together coordinate FAD.

Belongs to the geranylgeranyl reductase family. DGGGPL reductase subfamily. FAD is required as a cofactor.

The catalysed reaction is a 2,3-bis-O-phytanyl-sn-glycerol 1-phospholipid + 8 oxidized 2[4Fe-4S]-[ferredoxin] = a 2,3-bis-O-(geranylgeranyl)-sn-glycerol 1-phospholipid + 8 reduced 2[4Fe-4S]-[ferredoxin] + 16 H(+). It catalyses the reaction 2,3-bis-O-(phytanyl)-sn-glycerol 1-phosphate + 8 oxidized 2[4Fe-4S]-[ferredoxin] = 2,3-bis-O-(geranylgeranyl)-sn-glycerol 1-phosphate + 8 reduced 2[4Fe-4S]-[ferredoxin] + 16 H(+). It carries out the reaction a 2,3-bis-O-phytanyl-sn-glycerol 1-phospholipid + 8 A = a 2,3-bis-O-(geranylgeranyl)-sn-glycerol 1-phospholipid + 8 AH2. The enzyme catalyses CDP-2,3-bis-O-(geranylgeranyl)-sn-glycerol + 8 AH2 = CDP-2,3-bis-O-(phytanyl)-sn-glycerol + 8 A. The catalysed reaction is archaetidylserine + 8 AH2 = 2,3-bis-O-phytanyl-sn-glycero-3-phospho-L-serine + 8 A. The protein operates within membrane lipid metabolism; glycerophospholipid metabolism. In terms of biological role, is involved in the reduction of 2,3-digeranylgeranylglycerophospholipids (unsaturated archaeols) into 2,3-diphytanylglycerophospholipids (saturated archaeols) in the biosynthesis of archaeal membrane lipids. Catalyzes the formation of archaetidic acid (2,3-di-O-phytanyl-sn-glyceryl phosphate) from 2,3-di-O-geranylgeranylglyceryl phosphate (DGGGP) via the hydrogenation of each double bond of the isoprenoid chains. Is also probably able to reduce double bonds of geranyl groups in CDP-2,3-bis-O-(geranylgeranyl)-sn-glycerol and archaetidylserine, thus acting at various stages in the biosynthesis of archaeal membrane lipids. The polypeptide is Digeranylgeranylglycerophospholipid reductase (Methanothrix thermoacetophila (strain DSM 6194 / JCM 14653 / NBRC 101360 / PT) (Methanosaeta thermophila)).